The chain runs to 420 residues: MKLFVHLVLFISLFIPYFTKAALYVDIKKSSVGNIGLVVSKCTCKTALESELSENIAKVIGTNLSNCGLFNVKRGAEAESKSWKSDTVVTVSLSEISGSALELSFRLFDTFTKRELLTQSVVFPAKDWRKIGHLVSDVIHDRLIGEKGHFNTKITYIAEEKDSNYKSVRKIAVMNQDGSNIKYLTNGDRFVSTPRFSPNGKGIVYISYANGKSYIILKNLKDNTESIISTFEGVVSAPRFSPDGKSLLISHSLGGETNILSLDLSSKRTKKITKGSAISTSPSFSPDQKYMAFSSDISGSQQLYVIDFTNKSKKPKRISFGSGRYATPVWSPKGDLIAFTKIQSGKFYIGVMKPDGKEERLLSEGHKIESPAWLPNGREIIFTRTESPSNSKLYLVDLVKKNQKMVSTPTNASLPDWSYF.

Positions 1-21 (MKLFVHLVLFISLFIPYFTKA) are cleaved as a signal peptide.

The protein belongs to the TolB family. As to quaternary structure, the Tol-Pal system is composed of five core proteins: the inner membrane proteins TolA, TolQ and TolR, the periplasmic protein TolB and the outer membrane protein Pal. They form a network linking the inner and outer membranes and the peptidoglycan layer.

The protein localises to the periplasm. Part of the Tol-Pal system, which plays a role in outer membrane invagination during cell division and is important for maintaining outer membrane integrity. The polypeptide is Tol-Pal system protein TolB (Wolbachia sp. subsp. Drosophila simulans (strain wRi)).